The following is a 979-amino-acid chain: DNA ligase 4 (979 aa).

The segment at methionine 1 to leucine 39 is disordered. Glutamate 320, lysine 322, leucine 323, arginine 327, glutamate 389, phenylalanine 430, glutamate 490, lysine 495, lysine 512, and lysine 514 together coordinate ATP. Residue lysine 322 is the N6-AMP-lysine intermediate of the active site. Glutamate 389 is a Mg(2+) binding site. Glutamate 490 is a Mg(2+) binding site. 2 BRCT domains span residues proline 721–leucine 814 and leucine 867–proline 965.

Belongs to the ATP-dependent DNA ligase family. Mg(2+) is required as a cofactor.

The protein localises to the nucleus. The catalysed reaction is ATP + (deoxyribonucleotide)n-3'-hydroxyl + 5'-phospho-(deoxyribonucleotide)m = (deoxyribonucleotide)n+m + AMP + diphosphate.. Its function is as follows. DNA ligase involved in DNA non-homologous end joining (NHEJ); required for double-strand break (DSB) repair. This chain is DNA ligase 4 (lig4), found in Aspergillus fumigatus (strain ATCC MYA-4609 / CBS 101355 / FGSC A1100 / Af293) (Neosartorya fumigata).